We begin with the raw amino-acid sequence, 329 residues long: Solute carrier family 35 member B1 (329 aa).

8 helical membrane-spanning segments follow: residues 21 to 41 (AVCF…QETI), 60 to 80 (TLVF…IQFF), 91 to 111 (WLYG…NSAL), 142 to 162 (YPMA…LFLY), 175 to 195 (VFGF…LTGV), 220 to 240 (TLVL…LAFT), 250 to 270 (ILLF…TVVY), and 292 to 312 (VLLF…LVFL). Residues 325–329 (KKTTH) carry the Di-lysine motif motif.

Belongs to the nucleotide-sugar transporter family. SLC35B subfamily.

The protein localises to the endoplasmic reticulum membrane. Functionally, probable sugar transporter. The chain is Solute carrier family 35 member B1 (slc35b1) from Danio rerio (Zebrafish).